Here is a 154-residue protein sequence, read N- to C-terminus: Small ribosomal subunit protein uS19B (154 aa).

At Ser-63 the chain carries Phosphoserine.

This sequence belongs to the universal ribosomal protein uS19 family. In terms of assembly, component of the small ribosomal subunit (SSU). Mature yeast ribosomes consist of a small (40S) and a large (60S) subunit. The 40S small subunit contains 1 molecule of ribosomal RNA (18S rRNA) and at least 33 different proteins. The large 60S subunit contains 3 rRNA molecules (25S, 5.8S and 5S rRNA) and at least 46 different proteins.

Its subcellular location is the cytoplasm. The protein resides in the nucleus. It localises to the nucleolus. In terms of biological role, component of the ribosome, a large ribonucleoprotein complex responsible for the synthesis of proteins in the cell. The small ribosomal subunit (SSU) binds messenger RNAs (mRNAs) and translates the encoded message by selecting cognate aminoacyl-transfer RNA (tRNA) molecules. The large subunit (LSU) contains the ribosomal catalytic site termed the peptidyl transferase center (PTC), which catalyzes the formation of peptide bonds, thereby polymerizing the amino acids delivered by tRNAs into a polypeptide chain. The nascent polypeptides leave the ribosome through a tunnel in the LSU and interact with protein factors that function in enzymatic processing, targeting, and the membrane insertion of nascent chains at the exit of the ribosomal tunnel. uS19 is involved in the nuclear export of the small ribosomal subunit precursor. Has a role in the late stage of the assembly of pre-40S particles within the nucleus and controls their export to the cytoplasm. In Schizosaccharomyces pombe (strain 972 / ATCC 24843) (Fission yeast), this protein is Small ribosomal subunit protein uS19B (rps1502).